A 203-amino-acid polypeptide reads, in one-letter code: Holliday junction branch migration complex subunit RuvA (203 aa).

The domain I stretch occupies residues 1-64; the sequence is MIGRLNGILV…EDAQLLYGFI (64 aa). The segment at 65-143 is domain II; the sequence is TKQERALFRL…SLLEASVGNE (79 aa). Positions 144–154 are flexible linker; it reads REFMLQTNYTA. The interval 155–203 is domain III; it reads PAANAEEDAISALVSLGYKPPQASRAVSKAYKEGMDTETLIKLALKSML.

The protein belongs to the RuvA family. In terms of assembly, homotetramer. Forms an RuvA(8)-RuvB(12)-Holliday junction (HJ) complex. HJ DNA is sandwiched between 2 RuvA tetramers; dsDNA enters through RuvA and exits via RuvB. An RuvB hexamer assembles on each DNA strand where it exits the tetramer. Each RuvB hexamer is contacted by two RuvA subunits (via domain III) on 2 adjacent RuvB subunits; this complex drives branch migration. In the full resolvosome a probable DNA-RuvA(4)-RuvB(12)-RuvC(2) complex forms which resolves the HJ.

It localises to the cytoplasm. Functionally, the RuvA-RuvB-RuvC complex processes Holliday junction (HJ) DNA during genetic recombination and DNA repair, while the RuvA-RuvB complex plays an important role in the rescue of blocked DNA replication forks via replication fork reversal (RFR). RuvA specifically binds to HJ cruciform DNA, conferring on it an open structure. The RuvB hexamer acts as an ATP-dependent pump, pulling dsDNA into and through the RuvAB complex. HJ branch migration allows RuvC to scan DNA until it finds its consensus sequence, where it cleaves and resolves the cruciform DNA. The chain is Holliday junction branch migration complex subunit RuvA from Shewanella denitrificans (strain OS217 / ATCC BAA-1090 / DSM 15013).